Reading from the N-terminus, the 634-residue chain is Replication protein E1 (634 aa).

The short motif at 84-86 (KRK) is the Nuclear localization signal element. Ser90 carries the phosphoserine; by host modification. The segment covering 91 to 115 (QNSPLQDITNQSNSQQSTDEVNNLQ) has biased composition (polar residues). A disordered region spans residues 91–128 (QNSPLQDITNQSNSQQSTDEVNNLQAKRRAVDSVPDSG). The DNA-binding region stretch occupies residues 172 to 338 (AQASSVTKIC…QTQLEHSFED (167 aa)). In terms of domain architecture, SF3 helicase spans 437–587 (VNFIYFLQVL…FPFDSNGNPV (151 aa)). 463-470 (GPPNTGKS) contributes to the ATP binding site.

Belongs to the papillomaviridae E1 protein family. Can form hexamers. Interacts with E2 protein; this interaction increases E1 DNA binding specificity. Interacts with host DNA polymerase subunit POLA2. Interacts with host single stranded DNA-binding protein RPA1. Interacts with host TOP1; this interaction stimulates the enzymatic activity of TOP1. Phosphorylated.

The protein localises to the host nucleus. It carries out the reaction Couples ATP hydrolysis with the unwinding of duplex DNA by translocating in the 3'-5' direction.. It catalyses the reaction ATP + H2O = ADP + phosphate + H(+). ATP-dependent DNA 3'-5' helicase required for initiation of viral DNA replication. It forms a complex with the viral E2 protein. The E1-E2 complex binds to the replication origin which contains binding sites for both proteins. During the initial step, a dimer of E1 interacts with a dimer of protein E2 leading to a complex that binds the viral origin of replication with high specificity. Then, a second dimer of E1 displaces the E2 dimer in an ATP-dependent manner to form the E1 tetramer. Following this, two E1 monomers are added to each half of the site, which results in the formation of two E1 trimers on the viral ori. Subsequently, two hexamers will be created. The double hexamer acts as a bi-directional helicase machinery and unwinds the viral DNA and then recruits the host DNA polymerase to start replication. The polypeptide is Replication protein E1 (Human papillomavirus 69).